The sequence spans 1373 residues: DNA-directed RNA polymerase subunit beta (1373 aa).

The protein belongs to the RNA polymerase beta chain family. In terms of assembly, the RNAP catalytic core consists of 2 alpha, 1 beta, 1 beta' and 1 omega subunit. When a sigma factor is associated with the core the holoenzyme is formed, which can initiate transcription.

It catalyses the reaction RNA(n) + a ribonucleoside 5'-triphosphate = RNA(n+1) + diphosphate. In terms of biological role, DNA-dependent RNA polymerase catalyzes the transcription of DNA into RNA using the four ribonucleoside triphosphates as substrates. The sequence is that of DNA-directed RNA polymerase subunit beta from Rickettsia canadensis (strain McKiel).